A 456-amino-acid chain; its full sequence is Solute carrier family 49 member 4 homolog (456 aa).

Residues 1–29 (MGLEWSSPGERQPLLFPGGPRSPRVFGRR) lie on the Cytoplasmic side of the membrane. The Di-leucine motif; mediates lysosomal localization signature appears at 14–15 (LL). A helical membrane pass occupies residues 30 to 50 (WLVLLLFSVLAFLQGLVWNSW). Topologically, residues 51–67 (GPIQISARTAYKFSGLD) are lumenal. Residues 68–88 (IALLVLWGPIGFLPCFLFMWL) form a helical membrane-spanning segment. Over 89-95 (MDNRGLR) the chain is Cytoplasmic. A helical membrane pass occupies residues 96–116 (ITVLLTALLMVLGAGLRCVPV). Residues 117–123 (EDLAIRR) lie on the Lumenal side of the membrane. The chain crosses the membrane as a helical span at residues 124 to 144 (ILIHGGQLLNGFAGPTVMNAA). Topologically, residues 145–162 (PFLSTTWFAPDERATATA) are cytoplasmic. The chain crosses the membrane as a helical span at residues 163–183 (IASMLNYLGGACAFLVGPLVV). Residues 184 to 207 (PAPNSTSGLLLYSGSTDAIKDRIE) lie on the Lumenal side of the membrane. A glycan (N-linked (GlcNAc...) asparagine) is linked at N187. Residues 208–228 (AVMYAEFGIIFVVFAAILAYF) form a helical membrane-spanning segment. Residues 229–259 (PARPPVPPSVAAASRRLSYRTSIFRLLSNLR) lie on the Cytoplasmic side of the membrane. The chain crosses the membrane as a helical span at residues 260-280 (FLLIVLAYAIPLGFYSGWIGV). Residues 281–292 (LDLILTPVHVTQ) are Lumenal-facing. Residues 293-313 (VDAGWVGFWSIVGGCVVGIAV) form a helical membrane-spanning segment. The Cytoplasmic portion of the chain corresponds to 314–326 (GRFADSIRGVLKP). A helical membrane pass occupies residues 327–347 (ILLLLFSGATLSATWFTLTFL). At 348-362 (SNVTHLPLTTATLYT) the chain is on the lumenal side. N-linked (GlcNAc...) asparagine glycosylation occurs at N349. Residues 363–383 (SCILIGVFLNGTVPIFFELFV) traverse the membrane as a helical segment. Residues 384-392 (ETVYPIPEG) are Cytoplasmic-facing. A helical membrane pass occupies residues 393–413 (IACGVVTFLSNIFMGVLLVFL). Residues 414-420 (TMYQMEL) lie on the Lumenal side of the membrane. Residues 421 to 441 (SWLNWCLTGSCFLSLFFIACF) traverse the membrane as a helical segment. The Cytoplasmic portion of the chain corresponds to 442-456 (RESYDRLYLDVFVSV).

This sequence belongs to the major facilitator superfamily.

The protein resides in the lysosome membrane. The enzyme catalyses pyridoxine(out) + n H(+)(out) = pyridoxine(in) + n H(+)(in). Its function is as follows. Mediates H(+)-dependent pyridoxine transport. In Xenopus laevis (African clawed frog), this protein is Solute carrier family 49 member 4 homolog (slc49a4).